The following is an 89-amino-acid chain: Small ribosomal subunit protein bS20 (89 aa).

Disordered stretches follow at residues methionine 1 to lysine 25 and lysine 69 to serine 89. Over residues alanine 7–histidine 20 the composition is skewed to basic residues.

Belongs to the bacterial ribosomal protein bS20 family.

Functionally, binds directly to 16S ribosomal RNA. In Geobacillus kaustophilus (strain HTA426), this protein is Small ribosomal subunit protein bS20.